The sequence spans 134 residues: D-xylulose reductase (134 aa).

A disordered region spans residues 31 to 115 (PATTTXYKXQ…XXQXDKIGRY (85 aa)). Residues 50–59 (QTHEGTHQDV) show a composition bias toward basic and acidic residues.

This sequence belongs to the zinc-containing alcohol dehydrogenase family.

The catalysed reaction is xylitol + NAD(+) = D-xylulose + NADH + H(+). Activated by calcium and inhibited by zinc. The polypeptide is D-xylulose reductase (Sus scrofa (Pig)).